A 129-amino-acid chain; its full sequence is uncharacterized protein (129 aa).

The 124-residue stretch at 6–129 (QVHHIAIIAT…DGLPLELYEQ (124 aa)) folds into the VOC domain. Residues His9, Glu57, His78, and Glu125 each coordinate a divalent metal cation.

It to B.subtilis YwkD.

This is an uncharacterized protein from Escherichia coli (strain K12).